The sequence spans 60 residues: Cytotoxin 2 (60 aa).

Disulfide bonds link C3/C21, C14/C38, C42/C53, and C54/C59.

This sequence belongs to the three-finger toxin family. Short-chain subfamily. Type IA cytotoxin sub-subfamily. Monomer in solution; Homodimer and oligomer in the presence of negatively charged lipids forming a pore with a size ranging between 20 and 30 Angstroms. Expressed by the venom gland.

Its subcellular location is the secreted. The protein localises to the target cell membrane. Shows cytolytic activity on many different cells by forming pore in lipid membranes. In vivo, increases heart rate or kills the animal by cardiac arrest. In addition, it binds to heparin with high affinity, interacts with Kv channel-interacting protein 1 (KCNIP1) in a calcium-independent manner, and binds to integrin alpha-V/beta-3 (ITGAV/ITGB3) with moderate affinity. The chain is Cytotoxin 2 from Naja annulifera (Banded Egyptian cobra).